A 467-amino-acid chain; its full sequence is Ribulose bisphosphate carboxylase large chain (467 aa).

Residue Lys5 is modified to N6,N6,N6-trimethyllysine. Asn114 and Thr164 together coordinate substrate. The active-site Proton acceptor is the Lys166. Residue Lys168 coordinates substrate. 3 residues coordinate Mg(2+): Lys192, Asp194, and Glu195. Position 192 is an N6-carboxylysine (Lys192). Residue His285 is the Proton acceptor of the active site. Residues Arg286, His318, and Ser370 each coordinate substrate.

The protein belongs to the RuBisCO large chain family. Type I subfamily. Heterohexadecamer of 8 large chains and 8 small chains; disulfide-linked. The disulfide link is formed within the large subunit homodimers. Mg(2+) serves as cofactor. Post-translationally, the disulfide bond which can form in the large chain dimeric partners within the hexadecamer appears to be associated with oxidative stress and protein turnover.

It localises to the plastid. The protein resides in the chloroplast. It carries out the reaction 2 (2R)-3-phosphoglycerate + 2 H(+) = D-ribulose 1,5-bisphosphate + CO2 + H2O. The catalysed reaction is D-ribulose 1,5-bisphosphate + O2 = 2-phosphoglycolate + (2R)-3-phosphoglycerate + 2 H(+). RuBisCO catalyzes two reactions: the carboxylation of D-ribulose 1,5-bisphosphate, the primary event in carbon dioxide fixation, as well as the oxidative fragmentation of the pentose substrate in the photorespiration process. Both reactions occur simultaneously and in competition at the same active site. This chain is Ribulose bisphosphate carboxylase large chain, found in Tasmannia insipida (Pepperbush).